The chain runs to 313 residues: Protein FixB (313 aa).

255-283 (LYLAVGISGQIQHMVGANASQTIFAINKD) serves as a coordination point for FAD.

It belongs to the ETF alpha-subunit/FixB family. As to quaternary structure, heterodimer of FixA and FixB.

It participates in amine and polyamine metabolism; carnitine metabolism. Functionally, required for anaerobic carnitine reduction. May bring reductant to CaiA. This is Protein FixB from Escherichia coli (strain K12 / MC4100 / BW2952).